Reading from the N-terminus, the 351-residue chain is Thiamine-phosphate synthase (351 aa).

The interval 1–127 is unknown; sequence MQNLAPASEG…SETAKALRYR (127 aa). The interval 64–84 is disordered; that stretch reads RAARQTDQDPGTALSHPQERD. The interval 128–351 is thiamine-phosphate synthase; it reads VYILEQALTL…LRRLSQGEPS (224 aa). Residues 178–182 and asparagine 210 contribute to the 4-amino-2-methyl-5-(diphosphooxymethyl)pyrimidine site; that span reads QYRDK. The Mg(2+) site is built by aspartate 211 and aspartate 230. Serine 249 lines the 4-amino-2-methyl-5-(diphosphooxymethyl)pyrimidine pocket. 275-277 is a binding site for 2-[(2R,5Z)-2-carboxy-4-methylthiazol-5(2H)-ylidene]ethyl phosphate; the sequence is TPT. Lysine 278 contacts 4-amino-2-methyl-5-(diphosphooxymethyl)pyrimidine. Glycine 305 lines the 2-[(2R,5Z)-2-carboxy-4-methylthiazol-5(2H)-ylidene]ethyl phosphate pocket.

The protein belongs to the thiamine-phosphate synthase family. Mg(2+) serves as cofactor.

The catalysed reaction is 2-[(2R,5Z)-2-carboxy-4-methylthiazol-5(2H)-ylidene]ethyl phosphate + 4-amino-2-methyl-5-(diphosphooxymethyl)pyrimidine + 2 H(+) = thiamine phosphate + CO2 + diphosphate. It carries out the reaction 2-(2-carboxy-4-methylthiazol-5-yl)ethyl phosphate + 4-amino-2-methyl-5-(diphosphooxymethyl)pyrimidine + 2 H(+) = thiamine phosphate + CO2 + diphosphate. It catalyses the reaction 4-methyl-5-(2-phosphooxyethyl)-thiazole + 4-amino-2-methyl-5-(diphosphooxymethyl)pyrimidine + H(+) = thiamine phosphate + diphosphate. Its pathway is cofactor biosynthesis; thiamine diphosphate biosynthesis; thiamine phosphate from 4-amino-2-methyl-5-diphosphomethylpyrimidine and 4-methyl-5-(2-phosphoethyl)-thiazole: step 1/1. In terms of biological role, condenses 4-methyl-5-(beta-hydroxyethyl)thiazole monophosphate (THZ-P) and 2-methyl-4-amino-5-hydroxymethyl pyrimidine pyrophosphate (HMP-PP) to form thiamine monophosphate (TMP). This is Thiamine-phosphate synthase from Thermosynechococcus vestitus (strain NIES-2133 / IAM M-273 / BP-1).